Reading from the N-terminus, the 369-residue chain is Methylthioribose-1-phosphate isomerase (369 aa).

Met1 is modified (N-acetylmethionine). Arg158 is modified (omega-N-methylarginine). Catalysis depends on Asp248, which acts as the Proton donor. Ser366 carries the post-translational modification Phosphoserine.

The protein belongs to the eIF-2B alpha/beta/delta subunits family. MtnA subfamily.

The protein localises to the cytoplasm. The protein resides in the nucleus. The catalysed reaction is 5-(methylsulfanyl)-alpha-D-ribose 1-phosphate = 5-(methylsulfanyl)-D-ribulose 1-phosphate. It functions in the pathway amino-acid biosynthesis; L-methionine biosynthesis via salvage pathway; L-methionine from S-methyl-5-thio-alpha-D-ribose 1-phosphate: step 1/6. Catalyzes the interconversion of methylthioribose-1-phosphate (MTR-1-P) into methylthioribulose-1-phosphate (MTRu-1-P). This is Methylthioribose-1-phosphate isomerase (Mri1) from Rattus norvegicus (Rat).